The following is a 26-amino-acid chain: DEAD-box ATP-dependent RNA helicase 1 (26 aa).

Residues 1-10 (RELLMGIFEK) carry the Q motif motif. 11 to 16 (NGTGKT) provides a ligand contact to ATP. Residues 11 to 26 (NGTGKTAAFVIPLLQK) enclose the Helicase ATP-binding domain.

The protein belongs to the DEAD box helicase family. DDX6/DHH1 subfamily.

It is found in the cytoplasm. The protein resides in the P-body. It carries out the reaction ATP + H2O = ADP + phosphate + H(+). Functionally, ATP-dependent RNA helicase involved in mRNA turnover, and more specifically in mRNA decapping. This chain is DEAD-box ATP-dependent RNA helicase 1, found in Catharanthus roseus (Madagascar periwinkle).